Reading from the N-terminus, the 110-residue chain is Protein YcgL (110 aa).

In terms of domain architecture, YcgL spans 14-98; sequence MFCVIYRSSK…PPEDLLKQHL (85 aa). Positions 88 to 110 are disordered; it reads PPPEDLLKQHLSSVGQNTSHADR. The segment covering 97–110 has biased composition (polar residues); sequence HLSSVGQNTSHADR.

In Salmonella typhi, this protein is Protein YcgL.